We begin with the raw amino-acid sequence, 366 residues long: Sulfate/thiosulfate import ATP-binding protein CysA 2 (366 aa).

Residues 14-243 (LSVHALCRRF…PASRFVAEFV (230 aa)) enclose the ABC transporter domain. Residue 46–53 (GPSGCGKT) participates in ATP binding.

Belongs to the ABC transporter superfamily. Sulfate/tungstate importer (TC 3.A.1.6) family. As to quaternary structure, the complex is composed of two ATP-binding proteins (CysA), two transmembrane proteins (CysT and CysW) and a solute-binding protein (CysP).

The protein resides in the cell inner membrane. The enzyme catalyses sulfate(out) + ATP + H2O = sulfate(in) + ADP + phosphate + H(+). It carries out the reaction thiosulfate(out) + ATP + H2O = thiosulfate(in) + ADP + phosphate + H(+). Functionally, part of the ABC transporter complex CysAWTP involved in sulfate/thiosulfate import. Responsible for energy coupling to the transport system. The protein is Sulfate/thiosulfate import ATP-binding protein CysA 2 of Chromobacterium violaceum (strain ATCC 12472 / DSM 30191 / JCM 1249 / CCUG 213 / NBRC 12614 / NCIMB 9131 / NCTC 9757 / MK).